Here is a 356-residue protein sequence, read N- to C-terminus: N-acyl-phosphatidylethanolamine-hydrolyzing phospholipase D 1 (356 aa).

Zn(2+)-binding residues include His144 and His146. An N-acyl-1,2-diacyl-sn-glycero-3-phosphoethanolamine is bound at residue Tyr147. Zn(2+) is bound by residues Asp148, His149, His217, and Asp248. His286 provides a ligand contact to an N-acyl-1,2-diacyl-sn-glycero-3-phosphoethanolamine. Residue His308 coordinates Zn(2+).

It belongs to the NAPE-PLD family. Requires Zn(2+) as cofactor. Expressed in interneurons that are in close proximity to the primary sensory neurons. Predominantly expressed in the pharynx but can also be found in cell bodies of the dorsal and ventral nerve cords.

The enzyme catalyses an N-acyl-1,2-diacyl-sn-glycero-3-phosphoethanolamine + H2O = an N-acylethanolamine + a 1,2-diacyl-sn-glycero-3-phosphate + H(+). The catalysed reaction is 1,2-dihexadecanoyl-sn-glycero-3-phospho-(N-hexadecanoyl)-ethanolamine + H2O = 1,2-dihexadecanoyl-sn-glycero-3-phosphate + N-hexadecanoylethanolamine + H(+). It catalyses the reaction N-(5Z,8Z,11Z,14Z-eicosatetraenoyl)-1,2-di-(9Z-octadecenoyl)-sn-glycero-3-phosphoethanolamine + H2O = N-(5Z,8Z,11Z,14Z-eicosatetraenoyl)-ethanolamine + 1,2-di-(9Z-octadecenoyl)-sn-glycero-3-phosphate + H(+). Its function is as follows. D-type phospholipase that hydrolyzes N-acyl-phosphatidylethanolamines (NAPEs) to produce bioactive N-acylethanolamines/fatty acid ethanolamides (NAEs/FAEs) and phosphatidic acid. NAEs are bioactive lipids that are involved in diverse physiological processes such as growth and lifespan. The chain is N-acyl-phosphatidylethanolamine-hydrolyzing phospholipase D 1 from Caenorhabditis elegans.